Reading from the N-terminus, the 397-residue chain is Fractalkine (397 aa).

Residues 1–24 (MAPISLSWLLRLATFCHLTVLLAG) form the signal peptide. Positions 25-100 (QHHGVTKCNI…RQAAALTRNG (76 aa)) are chemokine and involved in interaction with ITGAV:ITGB3 and ITGA4:ITGB1. Topologically, residues 25–341 (QHHGVTKCNI…PDAQAATRRQ (317 aa)) are extracellular. Cystine bridges form between cysteine 32–cysteine 58 and cysteine 36–cysteine 74. Asparagine 33 carries N-linked (GlcNAc...) asparagine glycosylation. The segment at 101–341 (GTFEKQIGEV…PDAQAATRRQ (241 aa)) is mucin-like stalk. Disordered regions lie at residues 128–265 (EPEA…REEM) and 289–309 (VPVS…SWTP). A compositionally biased stretch (polar residues) spans 133 to 147 (GESSSLEPTPSSQEA). The O-linked (GalNAc...) threonine glycan is linked to threonine 183. Positions 193–202 (TAATWQSSAP) are enriched in polar residues. A compositionally biased stretch (low complexity) spans 219 to 243 (PSTQDPSTQASTASSPAPEENAPSE). A glycan (O-linked (GalNAc...) serine) is linked at serine 253. Threonine 329 carries an O-linked (GalNAc...) threonine glycan. The chain crosses the membrane as a helical span at residues 342–362 (AVGLLAFLGLLFCLGVAMFTY). Over 363-397 (QSLQGCPRKMAGEMAEGLRYIPRSCGSNSYVLVPV) the chain is Cytoplasmic.

This sequence belongs to the intercrine delta family. In terms of assembly, monomer. Forms a ternary complex with CX3CR1 and ITGAV:ITGB3 or ITGA4:ITGB1. (Microbial infection) Interacts with pox virus crmD; this inhibits cell migration mediated by CX3CL1. As to quaternary structure, (Microbial infection) Interacts (via N-terminus) with human cytomegalovirus (HHV-5) US28. In terms of assembly, (Microbial infection) Interacts with P.falciparum (strain 3D7) CBP1 and CBP2 (via their extracellular domains); the interaction mediates the adhesion of infected erythrocytes with endothelial cells. In terms of processing, a soluble short 95 kDa form may be released by proteolytic cleavage from the long membrane-anchored form. O-glycosylated with core 1 or possibly core 8 glycans. In terms of tissue distribution, expressed in the seminal plasma, endometrial fluid and follicular fluid (at protein level). Small intestine, colon, testis, prostate, heart, brain, lung, skeletal muscle, kidney and pancreas. Most abundant in the brain and heart.

It is found in the cell membrane. The protein localises to the secreted. Its function is as follows. Chemokine that acts as a ligand for both CX3CR1 and integrins ITGAV:ITGB3 and ITGA4:ITGB1. The CX3CR1-CX3CL1 signaling exerts distinct functions in different tissue compartments, such as immune response, inflammation, cell adhesion and chemotaxis. Regulates leukocyte adhesion and migration processes at the endothelium. Can activate integrins in both a CX3CR1-dependent and CX3CR1-independent manner. In the presence of CX3CR1, activates integrins by binding to the classical ligand-binding site (site 1) in integrins. In the absence of CX3CR1, binds to a second site (site 2) in integrins which is distinct from site 1 and enhances the binding of other integrin ligands to site 1. The soluble form is chemotactic for T-cells and monocytes, but not for neutrophils. In terms of biological role, the membrane-bound form promotes adhesion of those leukocytes to endothelial cells. Functionally, (Microbial infection) Mediates the cytoadherence of erythrocytes infected with parasite P.falciparum (strain 3D7) with endothelial cells by interacting with P.falciparum CBP1 and CBP2 expressed at the surface of erythrocytes. The adhesion prevents the elimination of infected erythrocytes by the spleen. The protein is Fractalkine of Homo sapiens (Human).